Consider the following 2883-residue polypeptide: Bifunctional DNA-directed RNA polymerase subunit beta-beta' (2883 aa).

The DNA-directed RNA polymerase subunit beta stretch occupies residues 1-1377; sequence MPTTLKSGNR…DVTVYGETEE (1377 aa). A DNA-directed RNA polymerase subunit beta' region spans residues 1382 to 2883; the sequence is PMPIKEDDRP…IRIKEKTEGA (1502 aa). Positions 1447, 1449, 1462, and 1465 each coordinate Zn(2+). Residues D1846, D1848, and D1850 each contribute to the Mg(2+) site. Zn(2+)-binding residues include C2176, C2250, C2257, and C2260.

This sequence in the N-terminal section; belongs to the RNA polymerase beta chain family. In the C-terminal section; belongs to the RNA polymerase beta' chain family. In terms of assembly, the RNAP catalytic core consists of 2 alpha, 1 beta/beta' and 1 omega subunit. When a sigma factor is associated with the core the holoenzyme is formed, which can initiate transcription. Mg(2+) serves as cofactor. It depends on Zn(2+) as a cofactor.

The enzyme catalyses RNA(n) + a ribonucleoside 5'-triphosphate = RNA(n+1) + diphosphate. In terms of biological role, DNA-dependent RNA polymerase catalyzes the transcription of DNA into RNA using the four ribonucleoside triphosphates as substrates. This chain is Bifunctional DNA-directed RNA polymerase subunit beta-beta' (rpoBC), found in Wolinella succinogenes (strain ATCC 29543 / DSM 1740 / CCUG 13145 / JCM 31913 / LMG 7466 / NCTC 11488 / FDC 602W) (Vibrio succinogenes).